A 2025-amino-acid chain; its full sequence is E3 ubiquitin-protein ligase TTC3 (2025 aa).

The tract at residues 1-230 (MDNFAEGDFT…TQSCMDCIEE (230 aa)) is interaction with POLG. TPR repeat units lie at residues 231-264 (GELM…RPEN) and 266-298 (LLYG…KNTW). Phosphoserine; by PKB/AKT2 is present on Ser378. Residues 423 to 458 (DCHPEFSPPSSQPPKHKGKQKSRNNESEKFSSSSPL) are disordered. 2 TPR repeats span residues 536–572 (VLVV…YPSE) and 576–609 (CLAY…IYRL). The interval 786-805 (ERMEEDLRESNPPKNEEQKE) is disordered. Residues 793–805 (RESNPPKNEEQKE) are compositionally biased toward basic and acidic residues. The residue at position 1009 (Ser1009) is a Phosphoserine. Disordered regions lie at residues 1012 to 1068 (APFS…GPFA), 1215 to 1295 (KPDV…SCNS), 1773 to 1842 (DPSV…SPKK), and 1894 to 1944 (ILDE…QKAE). Residues 1019-1029 (VKNKSKKKKPK) show a composition bias toward basic residues. Over residues 1038-1052 (SGTTSVTSNNEIITS) the composition is skewed to polar residues. Residue Ser1061 is modified to Phosphoserine. Over residues 1894-1912 (ILDEQKKKKPNPGKDKRTY) the composition is skewed to basic and acidic residues. Polar residues predominate over residues 1913 to 1928 (EPSSATPVTRSSQGSP). The RING-type zinc finger occupies 1957–1997 (CEICHEVFKSKNVRVLKCGHKYHKGCFKQWLKGQSACPACQ). The interval 2004 to 2025 (EESPSGRGWPSQNQELPSCSSR) is disordered. Positions 2013 to 2025 (PSQNQELPSCSSR) are enriched in polar residues.

Interacts (when phosphorylated on Ser-378) with AKT1, AKT2 and AKT3 (when phosphorylated). Interacts with CIT. Interacts with POLG. Interacts with HSP70. Interacts with SMURF2. In terms of processing, phosphorylation on Ser-378 by Akt is required for ubiquitin ligase activity. Post-translationally, proteolytically cleaved into differently sized N- and C-terminal fragments. As to expression, found in all tissues examined.

The protein resides in the nucleus. The protein localises to the cytoplasm. Its subcellular location is the golgi apparatus. It carries out the reaction S-ubiquitinyl-[E2 ubiquitin-conjugating enzyme]-L-cysteine + [acceptor protein]-L-lysine = [E2 ubiquitin-conjugating enzyme]-L-cysteine + N(6)-ubiquitinyl-[acceptor protein]-L-lysine.. It participates in protein modification; protein ubiquitination. Its function is as follows. E3 ubiquitin-protein ligase which catalyzes the formation of 'Lys-48'-polyubiquitin chains. Mediates the ubiquitination and subsequent degradation of phosphorylated Akt (AKT1, AKT2 and AKT3) in the nucleus. Acts as a terminal regulator of Akt signaling after activation; its phosphorylation by Akt, which is a prerequisite for ubiquitin ligase activity, suggests the existence of a regulation mechanism required to control Akt levels after activation. Positively regulates TGFB1-induced epithelial-mesenchymal transition and myofibroblast differentiation by mediating the ubiquitination and subsequent degradation of SMURF2. Regulates neuronal differentiation by regulating actin remodeling and Golgi organization via a signaling cascade involving RHOA, CIT and ROCK. Inhibits cell proliferation. This Homo sapiens (Human) protein is E3 ubiquitin-protein ligase TTC3 (TTC3).